Here is a 255-residue protein sequence, read N- to C-terminus: Thiazole synthase (255 aa).

Lysine 96 acts as the Schiff-base intermediate with DXP in catalysis. Residues glycine 157, 183 to 184 (AG), and 205 to 206 (NT) contribute to the 1-deoxy-D-xylulose 5-phosphate site.

This sequence belongs to the ThiG family. Homotetramer. Forms heterodimers with either ThiH or ThiS.

The protein resides in the cytoplasm. It carries out the reaction [ThiS sulfur-carrier protein]-C-terminal-Gly-aminoethanethioate + 2-iminoacetate + 1-deoxy-D-xylulose 5-phosphate = [ThiS sulfur-carrier protein]-C-terminal Gly-Gly + 2-[(2R,5Z)-2-carboxy-4-methylthiazol-5(2H)-ylidene]ethyl phosphate + 2 H2O + H(+). The protein operates within cofactor biosynthesis; thiamine diphosphate biosynthesis. Its function is as follows. Catalyzes the rearrangement of 1-deoxy-D-xylulose 5-phosphate (DXP) to produce the thiazole phosphate moiety of thiamine. Sulfur is provided by the thiocarboxylate moiety of the carrier protein ThiS. In vitro, sulfur can be provided by H(2)S. This chain is Thiazole synthase, found in Staphylococcus epidermidis (strain ATCC 35984 / DSM 28319 / BCRC 17069 / CCUG 31568 / BM 3577 / RP62A).